A 164-amino-acid chain; its full sequence is Envelope glycoprotein L (164 aa).

The signal sequence occupies residues 1 to 24 (MRSLDRYAIFILLACGLLWRPCLS).

This sequence belongs to the herpesviridae glycoprotein L family. Interacts with glycoprotein H (gH); this interaction is necessary for the correct processing and cell surface expression of gH. The heterodimer gH/gL seems to interact with gB trimers during fusion.

Its subcellular location is the virion membrane. It localises to the host cell membrane. It is found in the host Golgi apparatus. The protein resides in the host trans-Golgi network. Functionally, the heterodimer glycoprotein H-glycoprotein L is required for the fusion of viral and plasma membranes leading to virus entry into the host cell. Acts as a functional inhibitor of gH and maintains gH in an inhibited form. Upon binding to host integrins, gL dissociates from gH leading to activation of the viral fusion glycoproteins gB and gH. This Equine herpesvirus 2 (strain 86/87) (EHV-2) protein is Envelope glycoprotein L.